The chain runs to 199 residues: Pyridoxine/pyridoxamine 5'-phosphate oxidase (199 aa).

Residues 44–49 (RTVLLK), 59–60 (YT), Lys66, and Gln91 contribute to the FMN site. Lys49 is a binding site for substrate. Tyr109, Arg113, and Ser117 together coordinate substrate. Residues 126-127 (QS) and Trp171 contribute to the FMN site. A substrate-binding site is contributed by 177 to 179 (RLH). Arg181 provides a ligand contact to FMN.

Belongs to the pyridoxamine 5'-phosphate oxidase family. As to quaternary structure, homodimer. FMN serves as cofactor.

The enzyme catalyses pyridoxamine 5'-phosphate + O2 + H2O = pyridoxal 5'-phosphate + H2O2 + NH4(+). It catalyses the reaction pyridoxine 5'-phosphate + O2 = pyridoxal 5'-phosphate + H2O2. It functions in the pathway cofactor metabolism; pyridoxal 5'-phosphate salvage; pyridoxal 5'-phosphate from pyridoxamine 5'-phosphate: step 1/1. Its pathway is cofactor metabolism; pyridoxal 5'-phosphate salvage; pyridoxal 5'-phosphate from pyridoxine 5'-phosphate: step 1/1. Its function is as follows. Catalyzes the oxidation of either pyridoxine 5'-phosphate (PNP) or pyridoxamine 5'-phosphate (PMP) into pyridoxal 5'-phosphate (PLP). The chain is Pyridoxine/pyridoxamine 5'-phosphate oxidase from Xanthomonas euvesicatoria pv. vesicatoria (strain 85-10) (Xanthomonas campestris pv. vesicatoria).